We begin with the raw amino-acid sequence, 1046 residues long: UDP-N-acetylglucosamine--peptide N-acetylglucosaminyltransferase 110 kDa subunit (1046 aa).

Ala-2 carries the N-acetylalanine modification. Ser-3 and Ser-4 each carry phosphoserine; by GSK3-beta; alternate. Residues Ser-3 and Ser-4 are each glycosylated (O-linked (GlcNAc) serine; alternate). At Ser-20 the chain carries Phosphoserine. 12 TPR repeats span residues Phe-21–Asn-54, Ala-89–Phe-122, Ile-123–Leu-156, Tyr-157–Phe-190, Ala-191–Phe-224, Leu-225–His-258, Ala-259–Phe-292, Pro-293–His-326, Ala-327–Phe-360, Ala-361–Phe-394, Ala-395–Phe-428, and Ala-429–Phe-462. O-linked (GlcNAc) serine; by autocatalysis glycosylation occurs at Ser-399. Thr-454 is subject to Phosphothreonine. A TPR 13; truncated repeat occupies Pro-463 to Leu-473. The DFP motif signature appears at Asp-464 to Tyr-466. The Nuclear localization signal motif lies at Lys-487–Pro-503. His-508 acts as the Proton acceptor in catalysis. UDP is bound by residues Gln-849, Lys-852, Ala-906–Lys-908, His-911–Arg-914, His-930–Thr-932, and Asp-935. Position 989 is a phosphotyrosine (Tyr-989). Residues Lys-991–Lys-1010 form a required for phosphatidylinositol 3,4,5-triphosphate binding region.

The protein belongs to the glycosyltransferase 41 family. O-GlcNAc transferase subfamily. Monomer; may exist in different oligomerization states in cells. Homotrimer, oligomerizes via TPR repeats 6 and 7. Trimerization is not necessary for activity in vitro, however it increases affinity for UDP-GlcNAc. Component of a THAP1/THAP3-HCFC1-OGT complex. Component of the NSL complex at least composed of MOF/KAT8, KANSL1, KANSL2, KANSL3, MCRS1, PHF20, OGT1/OGT, WDR5 and HCFC1. Found in a complex with KIF5B, RHOT1, RHOT2 and TRAK1. Found in a complex composed of at least SINHCAF, SIN3A, HDAC1, SAP30, RBBP4, OGT and TET1. Component of a complex composed of KMT2E/MLL5, OGT and USP7; the complex stabilizes KMT2E/MLL5, preventing KMT2E/MLL5 ubiquitination and proteasomal-mediated degradation. Interacts (via TPRs 1-6) with SIN3A; the interaction mediates transcriptional repression in parallel with histone deacetylase. Interacts (via TPR 5-6) with TET1, TET2 and TET3. Interacts (via TPR repeats 6 and 7) with ATXN10. Interacts with NSD2. Interacts with PROSER1; this interaction mediates TET2 O-GlcNAcylation and stability by promoting the interaction between OGT and TET2. Ubiquitinated by the SCF(FBXO31) complex, leading to its proteasomal degradation. In terms of processing, phosphorylation on Ser-3 or Ser-4 by GSK3-beta positively regulates its activity. Phosphorylation at Thr-454 by AMPK promotes nuclear localization. Post-translationally, glycosylated via autocatalysis; O-GlcNAcylation at Ser-399 promotes nuclear localization.

The protein resides in the nucleus. It is found in the cytoplasm. The enzyme catalyses L-seryl-[protein] + UDP-N-acetyl-alpha-D-glucosamine = 3-O-(N-acetyl-beta-D-glucosaminyl)-L-seryl-[protein] + UDP + H(+). The catalysed reaction is L-threonyl-[protein] + UDP-N-acetyl-alpha-D-glucosamine = 3-O-(N-acetyl-beta-D-glucosaminyl)-L-threonyl-[protein] + UDP + H(+). Its pathway is protein modification; protein glycosylation. Its activity is regulated as follows. Inhibited by UDP. Its function is as follows. Catalyzes the transfer of a single N-acetylglucosamine from UDP-GlcNAc to a serine or threonine residue in cytoplasmic and nuclear proteins resulting in their modification with a beta-linked N-acetylglucosamine (O-GlcNAc). Glycosylates a large and diverse number of proteins including histone H2B, AKT1, AMPK, ATG4B, CAPRIN1, EZH2, FNIP1, GSDMD, KRT7, LMNA, LMNB1, LMNB2, RPTOR, HOXA1, PFKL, KMT2E/MLL5, MAPT/TAU, TET2, RBL2, RET, NOD2 and HCFC1. Can regulate their cellular processes via cross-talk between glycosylation and phosphorylation or by affecting proteolytic processing. Involved in insulin resistance in muscle and adipocyte cells via glycosylating insulin signaling components and inhibiting the 'Thr-308' phosphorylation of AKT1, enhancing IRS1 phosphorylation and attenuating insulin signaling. Involved in glycolysis regulation by mediating glycosylation of 6-phosphofructokinase PFKL, inhibiting its activity. Plays a key role in chromatin structure by mediating O-GlcNAcylation of 'Ser-112' of histone H2B: recruited to CpG-rich transcription start sites of active genes via its interaction with TET proteins (TET1, TET2 or TET3). As part of the NSL complex indirectly involved in acetylation of nucleosomal histone H4 on several lysine residues. O-GlcNAcylation of 'Ser-75' of EZH2 increases its stability, and facilitating the formation of H3K27me3 by the PRC2/EED-EZH2 complex. Stabilizes KMT2E/MLL5 by mediating its glycosylation, thereby preventing KMT2E/MLL5 ubiquitination. Regulates circadian oscillation of the clock genes and glucose homeostasis in the liver. Stabilizes clock proteins BMAL1 and CLOCK through O-glycosylation, which prevents their ubiquitination and subsequent degradation. Promotes the CLOCK-BMAL1-mediated transcription of genes in the negative loop of the circadian clock such as PER1/2 and CRY1/2. O-glycosylates HCFC1 and regulates its proteolytic processing and transcriptional activity. Component of a THAP1/THAP3-HCFC1-OGT complex that is required for the regulation of the transcriptional activity of RRM1. Regulates mitochondrial motility in neurons by mediating glycosylation of TRAK1. Promotes autophagy by mediating O-glycosylation of ATG4B. Acts as a regulator of mTORC1 signaling by mediating O-glycosylation of RPTOR and FNIP1: O-GlcNAcylation of RPTOR in response to glucose sufficiency promotes activation of the mTORC1 complex. Catalyzes the transfer of a single N-acetylglucosamine from UDP-GlcNAc to a serine or threonine residue. Acts on cytoplasmic and nuclear proteins resulting in their modification with a beta-linked N-acetylglucosamine (O-GlcNAc). Glycosylates a large and diverse number of proteins including histone H2B, AKT1, ATG4B, EZH2, PFKL, KMT2E/MLL5, MAPT/TAU, NOD2 and HCFC1. Can regulate their cellular processes via cross-talk between glycosylation and phosphorylation or by affecting proteolytic processing. Probably by glycosylating KMT2E/MLL5, stabilizes KMT2E/MLL5 by preventing its ubiquitination. Involved in insulin resistance in muscle and adipocyte cells via glycosylating insulin signaling components and inhibiting the 'Thr-308' phosphorylation of AKT1, enhancing IRS1 phosphorylation and attenuating insulin signaling. Involved in glycolysis regulation by mediating glycosylation of 6-phosphofructokinase PFKL, inhibiting its activity. Component of a THAP1/THAP3-HCFC1-OGT complex that is required for the regulation of the transcriptional activity of RRM1. Plays a key role in chromatin structure by mediating O-GlcNAcylation of 'Ser-112' of histone H2B: recruited to CpG-rich transcription start sites of active genes via its interaction with TET proteins (TET1, TET2 or TET3). As part of the NSL complex indirectly involved in acetylation of nucleosomal histone H4 on several lysine residues. O-GlcNAcylation of 'Ser-75' of EZH2 increases its stability, and facilitating the formation of H3K27me3 by the PRC2/EED-EZH2 complex. Regulates circadian oscillation of the clock genes and glucose homeostasis in the liver. Stabilizes clock proteins BMAL1 and CLOCK through O-glycosylation, which prevents their ubiquitination and subsequent degradation. Promotes the CLOCK-BMAL1-mediated transcription of genes in the negative loop of the circadian clock such as PER1/2 and CRY1/2. O-glycosylates HCFC1 and regulates its proteolytic processing and transcriptional activity. Regulates mitochondrial motility in neurons by mediating glycosylation of TRAK1. Glycosylates HOXA1. O-glycosylates FNIP1. Promotes autophagy by mediating O-glycosylation of ATG4B. The sequence is that of UDP-N-acetylglucosamine--peptide N-acetylglucosaminyltransferase 110 kDa subunit (OGT) from Oryctolagus cuniculus (Rabbit).